A 268-amino-acid chain; its full sequence is Proenkephalin-A (268 aa).

Positions 1–24 (MARLLRLCTWLVALGPGLLATVQA) are cleaved as a signal peptide. Cystine bridges form between Cys-26–Cys-48, Cys-30–Cys-52, and Cys-33–Cys-65. The interval 163–184 (TGDDRDRENHHQEGGDSDEGVS) is disordered. Residues 164–176 (GDDRDRENHHQEG) are compositionally biased toward basic and acidic residues. 2 propeptides span residues 197–208 (SPQVEDEAKELQ) and 218–228 (VGRPEWWMDYQ). Ser-252 is modified (phosphoserine).

Belongs to the opioid neuropeptide precursor family. Proenkephalin-A is cleaved by CTSL to generate Met-enkephalin. In terms of processing, processed and degraded by ACE. Post-translationally, probably cleaved by ACE. Processed by ACE to generate Met-enkephalin in the nucleus accumbens of the brain. In terms of processing, the N-terminal domain contains 6 conserved cysteines thought to be involved in disulfide bonding and/or processing.

It localises to the cytoplasmic vesicle. It is found in the secretory vesicle. The protein resides in the chromaffin granule lumen. The protein localises to the secreted. Neuropeptide that competes with and mimic the effects of opiate drugs. They play a role in a number of physiologic functions, including pain perception and responses to stress. In terms of biological role, met-enkephalin-Arg-Phe neuropeptide acts as a strong ligand of Mu-type opioid receptor OPRM1. Met-enkephalin-Arg-Phe-binding to OPRM1 in the nucleus accumbens of the brain increases activation of OPRM1, leading to long-term synaptic depression of glutamate release. Functionally, increases glutamate release in the striatum and decreases GABA concentration in the striatum. Its function is as follows. Increases glutamate release in the striatum. The sequence is that of Proenkephalin-A (PENK) from Cavia porcellus (Guinea pig).